A 165-amino-acid chain; its full sequence is Disulfide bond formation protein B (165 aa).

Residues 1-11 (MICSKVPVRAW) lie on the Cytoplasmic side of the membrane. A helical membrane pass occupies residues 12 to 28 (FATLGLGCLGLVAVGMA). Residues 29 to 46 (LQTLLHLAPCPLCIFQRL) are Periplasmic-facing. Cysteine 38 and cysteine 41 form a disulfide bridge. Residues 47–61 (LYIMIGFVGLLGFVL) form a helical membrane-spanning segment. Residues 62–66 (PAGRL) lie on the Cytoplasmic side of the membrane. The chain crosses the membrane as a helical span at residues 67-84 (LWSTLAAGLGVLGFGVAA). The Periplasmic segment spans residues 85 to 142 (YQTWMQAFPDLAPECGFTDPNAIERLVDWLGMEWPSMFLATGFCTSRDWELLGLSMAN). A disulfide bridge links cysteine 99 with cysteine 128. A helical membrane pass occupies residues 143–161 (WSVLIFAGIVAYAVLLFVR). The Cytoplasmic segment spans residues 162–165 (KDRA).

The protein belongs to the DsbB family.

Its subcellular location is the cell inner membrane. Required for disulfide bond formation in some periplasmic proteins. Acts by oxidizing the DsbA protein. This chain is Disulfide bond formation protein B, found in Dechloromonas aromatica (strain RCB).